Here is a 510-residue protein sequence, read N- to C-terminus: NAD(P)H-quinone oxidoreductase subunit 2 A, chloroplastic (510 aa).

Helical transmembrane passes span 31 to 51 (FIFPECILIFGLILLLMIDLT), 59 to 79 (WFYFISSTSLVISITALLFRW), 99 to 119 (IFQFLILLCSTLCIPLSVEYI), 124 to 144 (MAITEFLLFVLTATLGGMFLC), 149 to 169 (LITIFVAPECFSLCSYLLSGY), 183 to 203 (YLLMGGASSSILVHGFSWLYG), 229 to 249 (ISIALIFITVGLGFKLSPAPF), 295 to 315 (WHLLLEILAILSMILGNLLAI), 323 to 343 (MLAYSSIGQIGYVIIGIIVGD), 354 to 374 (YMLFYISMNLGTFACIVLFGL), 395 to 415 (ALSLALCLLSLGGLPPLAGFF), and 418 to 438 (LYLFWCGWQAGLYFLVSIGLL).

Belongs to the complex I subunit 2 family. As to quaternary structure, NDH is composed of at least 16 different subunits, 5 of which are encoded in the nucleus.

The protein resides in the plastid. Its subcellular location is the chloroplast thylakoid membrane. It catalyses the reaction a plastoquinone + NADH + (n+1) H(+)(in) = a plastoquinol + NAD(+) + n H(+)(out). The enzyme catalyses a plastoquinone + NADPH + (n+1) H(+)(in) = a plastoquinol + NADP(+) + n H(+)(out). Its function is as follows. NDH shuttles electrons from NAD(P)H:plastoquinone, via FMN and iron-sulfur (Fe-S) centers, to quinones in the photosynthetic chain and possibly in a chloroplast respiratory chain. The immediate electron acceptor for the enzyme in this species is believed to be plastoquinone. Couples the redox reaction to proton translocation, and thus conserves the redox energy in a proton gradient. The sequence is that of NAD(P)H-quinone oxidoreductase subunit 2 A, chloroplastic from Saccharum officinarum (Sugarcane).